We begin with the raw amino-acid sequence, 332 residues long: Holliday junction branch migration complex subunit RuvB (332 aa).

Positions 1 to 181 (MTRFLDSDAM…FGITGHMEYY (181 aa)) are large ATPase domain (RuvB-L). ATP is bound by residues Leu20, Arg21, Gly62, Lys65, Thr66, Thr67, 128–130 (EDF), Arg171, Tyr181, and Arg218. Thr66 is a Mg(2+) binding site. Positions 182-252 (EENDLTEIIE…ITDKALTMLD (71 aa)) are small ATPAse domain (RuvB-S). A head domain (RuvB-H) region spans residues 255-332 (HEGLDYVDQK…EHLGYQRFDK (78 aa)). Arg291, Arg310, Arg312, and Arg315 together coordinate DNA.

Belongs to the RuvB family. In terms of assembly, homohexamer. Forms an RuvA(8)-RuvB(12)-Holliday junction (HJ) complex. HJ DNA is sandwiched between 2 RuvA tetramers; dsDNA enters through RuvA and exits via RuvB. An RuvB hexamer assembles on each DNA strand where it exits the tetramer. Each RuvB hexamer is contacted by two RuvA subunits (via domain III) on 2 adjacent RuvB subunits; this complex drives branch migration. In the full resolvosome a probable DNA-RuvA(4)-RuvB(12)-RuvC(2) complex forms which resolves the HJ.

Its subcellular location is the cytoplasm. The enzyme catalyses ATP + H2O = ADP + phosphate + H(+). Functionally, the RuvA-RuvB-RuvC complex processes Holliday junction (HJ) DNA during genetic recombination and DNA repair, while the RuvA-RuvB complex plays an important role in the rescue of blocked DNA replication forks via replication fork reversal (RFR). RuvA specifically binds to HJ cruciform DNA, conferring on it an open structure. The RuvB hexamer acts as an ATP-dependent pump, pulling dsDNA into and through the RuvAB complex. RuvB forms 2 homohexamers on either side of HJ DNA bound by 1 or 2 RuvA tetramers; 4 subunits per hexamer contact DNA at a time. Coordinated motions by a converter formed by DNA-disengaged RuvB subunits stimulates ATP hydrolysis and nucleotide exchange. Immobilization of the converter enables RuvB to convert the ATP-contained energy into a lever motion, pulling 2 nucleotides of DNA out of the RuvA tetramer per ATP hydrolyzed, thus driving DNA branch migration. The RuvB motors rotate together with the DNA substrate, which together with the progressing nucleotide cycle form the mechanistic basis for DNA recombination by continuous HJ branch migration. Branch migration allows RuvC to scan DNA until it finds its consensus sequence, where it cleaves and resolves cruciform DNA. The sequence is that of Holliday junction branch migration complex subunit RuvB from Streptococcus agalactiae serotype Ia (strain ATCC 27591 / A909 / CDC SS700).